We begin with the raw amino-acid sequence, 233 residues long: Uridylate kinase (233 aa).

ATP contacts are provided by residues 8-11 (KLSG), Gly51, and Arg55. UMP-binding positions include Asp68 and 129–136 (TSNPFFTT). 3 residues coordinate ATP: Thr156, Tyr162, and Asp165.

It belongs to the UMP kinase family. As to quaternary structure, homohexamer.

The protein resides in the cytoplasm. It catalyses the reaction UMP + ATP = UDP + ADP. It participates in pyrimidine metabolism; CTP biosynthesis via de novo pathway; UDP from UMP (UMPK route): step 1/1. With respect to regulation, inhibited by UTP. Its function is as follows. Catalyzes the reversible phosphorylation of UMP to UDP. This chain is Uridylate kinase, found in Thermosipho melanesiensis (strain DSM 12029 / CIP 104789 / BI429).